Reading from the N-terminus, the 447-residue chain is Peptide-N(4)-(N-acetyl-beta-glucosaminyl)asparagine amidase (447 aa).

Positions 209, 212, 241, and 244 each coordinate Zn(2+). The Nucleophile role is filled by Cys-267. Residues His-294 and Asp-311 contribute to the active site.

The protein belongs to the transglutaminase-like superfamily. PNGase family. It depends on Zn(2+) as a cofactor.

The protein localises to the cytoplasm. The catalysed reaction is Hydrolysis of an N(4)-(acetyl-beta-D-glucosaminyl)asparagine residue in which the glucosamine residue may be further glycosylated, to yield a (substituted) N-acetyl-beta-D-glucosaminylamine and a peptide containing an aspartate residue.. Functionally, specifically deglycosylates the denatured form of N-linked glycoproteins in the cytoplasm and assists their proteasome-mediated degradation. Cleaves the beta-aspartyl-glucosamine (GlcNAc) of the glycan and the amide side chain of Asn, converting Asn to Asp. Prefers proteins containing high-mannose over those bearing complex type oligosaccharides. Can recognize misfolded proteins in the endoplasmic reticulum that are exported to the cytosol to be destroyed and deglycosylate them, while it has no activity toward native proteins. Deglycosylation is a prerequisite for subsequent proteasome-mediated degradation of some, but not all, misfolded glycoproteins. The polypeptide is Peptide-N(4)-(N-acetyl-beta-glucosaminyl)asparagine amidase (PNG1) (Oryza sativa subsp. japonica (Rice)).